Here is a 132-residue protein sequence, read N- to C-terminus: CLAVATA3/ESR (CLE)-related protein TDIF (132 aa).

Residues 1–26 form the signal peptide; that stretch reads MDIDLLWSFGGWFFILFPETINYCMA. A helical transmembrane segment spans residues 42–62; the sequence is SCSSLFFVALLIITILITMLQ. A compositionally biased stretch (polar residues) spans 68 to 77; it reads EVTSLPTHQP. The interval 68 to 132 is disordered; sequence EVTSLPTHQP…PSGPNPISNR (65 aa). Residues 87–96 show a composition bias toward low complexity; it reads STSSTATTTT. Residues 101–111 are compositionally biased toward basic residues; that stretch reads KRTHHQSHPKP. Hydroxyproline occurs at positions 123 and 126. The O-linked (Ara...) hydroxyproline glycan is linked to Pro126.

It belongs to the CLV3/ESR signal peptide family. As to quaternary structure, interacts specifically with the leucine-rich repeat receptor-like protein kinase TDR. Post-translationally, the TDIFp peptide contains two hydroxprolines, but hydroxylation had no direct effect on TDIFp activity. In terms of processing, the O-glycosylation (arabinosylation) of the hydroxyproline Pro-126 enhances binding affinity of the TDIFp peptide for its receptor.

It is found in the secreted. The protein localises to the extracellular space. Its subcellular location is the cell membrane. Its function is as follows. Extracellular signal peptide that regulates cell fate. Represses tracheary element differentiation but promotes the formation of procambial cells adjacent to phloem cells in the veins. This Zinnia elegans (Garden zinnia) protein is CLAVATA3/ESR (CLE)-related protein TDIF.